A 513-amino-acid chain; its full sequence is Sugar transport protein 7 (513 aa).

Topologically, residues 1-26 are cytoplasmic; that stretch reads MAGGSFGPTGVAKERAEQYQGKVTSY. 12 consecutive transmembrane segments (helical) span residues 27-47, 84-104, 121-141, 144-164, 171-191, 205-225, 286-306, 324-344, 351-371, 387-407, 427-447, and 452-472; these read VIIA…DIGI, GLAA…LVAS, ISFL…MLLA, IMLG…LSEV, GGLN…ANMV, LSLG…YFLP, LVMA…SILF, YSSA…IGLV, ALLI…AVIL, VIVV…WGPL, ITVA…LGLL, and FGIF…VYFL. The Cytoplasmic portion of the chain corresponds to 473 to 513; the sequence is LPETKGVPIEEMTLLWSKHWFWKKVLPDATNLEDESKNVSV.

Belongs to the major facilitator superfamily. Sugar transporter (TC 2.A.1.1) family.

Its subcellular location is the cell membrane. Its function is as follows. Mediates an active uptake of hexoses, probably by sugar/hydrogen symport. The protein is Sugar transport protein 7 (STP7) of Arabidopsis thaliana (Mouse-ear cress).